A 119-amino-acid chain; its full sequence is Large ribosomal subunit protein uL18 (119 aa).

It belongs to the universal ribosomal protein uL18 family. As to quaternary structure, part of the 50S ribosomal subunit; part of the 5S rRNA/L5/L18/L25 subcomplex. Contacts the 5S and 23S rRNAs.

This is one of the proteins that bind and probably mediate the attachment of the 5S RNA into the large ribosomal subunit, where it forms part of the central protuberance. The chain is Large ribosomal subunit protein uL18 from Chlorobium phaeovibrioides (strain DSM 265 / 1930) (Prosthecochloris vibrioformis (strain DSM 265)).